Reading from the N-terminus, the 344-residue chain is AA9 family lytic polysaccharide monooxygenase D (344 aa).

The N-terminal stretch at 1 to 23 (MKTATSYAAFLLSALAALPHASA) is a signal peptide. Cu(2+) is bound at residue His24. Residues Cys70 and Cys193 are joined by a disulfide bond. His179 lines the O2 pocket. Residue Tyr190 coordinates Cu(2+). Asn201 and Asn207 each carry an N-linked (GlcNAc...) asparagine glycan. The segment at 240-321 (PPLSNLVSGD…PTTSGNLSAN (82 aa)) is disordered. Over residues 259 to 292 (STSSATLSGGAAPTGTASGSTPAGTSQPSSTTGT) the composition is skewed to low complexity. Polar residues predominate over residues 311-320 (APTTSGNLSA). Asn317 is a glycosylation site (N-linked (GlcNAc...) asparagine).

It belongs to the polysaccharide monooxygenase AA9 family. Requires Cu(2+) as cofactor.

It is found in the secreted. The catalysed reaction is [(1-&gt;4)-beta-D-glucosyl]n+m + reduced acceptor + O2 = 4-dehydro-beta-D-glucosyl-[(1-&gt;4)-beta-D-glucosyl]n-1 + [(1-&gt;4)-beta-D-glucosyl]m + acceptor + H2O.. Lytic polysaccharide monooxygenase (LPMO) that depolymerizes crystalline and amorphous polysaccharides via the oxidation of scissile alpha- or beta-(1-4)-glycosidic bonds, yielding C1 or C4 oxidation products. Catalysis by LPMOs requires the reduction of the active-site copper from Cu(II) to Cu(I) by a reducing agent and H(2)O(2) or O(2) as a cosubstrate. This Gloeophyllum trabeum (strain ATCC 11539 / FP-39264 / Madison 617) (Brown rot fungus) protein is AA9 family lytic polysaccharide monooxygenase D.